The primary structure comprises 304 residues: Voltage-dependent anion channel-forming protein YneE (304 aa).

The next 4 helical transmembrane spans lie at 28 to 48, 50 to 70, 194 to 214, and 220 to 240; these read LLLN…YTHL, IKFT…FLGF, VLAG…TLIL, and LFCI…TPFI.

The protein belongs to the anion channel-forming bestrophin (TC 1.A.46) family.

The protein resides in the cell membrane. The polypeptide is Voltage-dependent anion channel-forming protein YneE (yneE) (Escherichia coli (strain K12)).